We begin with the raw amino-acid sequence, 476 residues long: Probable serine carboxypeptidase CPVL (476 aa).

Residues 1-22 (MVGTMWKVIVSLVLLMPGSCDG) form the signal peptide. Residues Asn81 and Asn132 are each glycosylated (N-linked (GlcNAc...) asparagine). The active site involves Ser204. Asn307 and Asn346 each carry an N-linked (GlcNAc...) asparagine glycan. Active-site residues include Asp388 and His448.

The protein belongs to the peptidase S10 family.

Functionally, may be involved in the digestion of phagocytosed particles in the lysosome, participation in an inflammatory protease cascade, and trimming of peptides for antigen presentation. The protein is Probable serine carboxypeptidase CPVL (CPVL) of Pongo abelii (Sumatran orangutan).